The following is a 25-amino-acid chain: uncharacterized protein (25 aa).

This is an uncharacterized protein from Archaeoglobus fulgidus (strain ATCC 49558 / DSM 4304 / JCM 9628 / NBRC 100126 / VC-16).